The following is a 1173-amino-acid chain: MNVPCVVGMNEVAWQESRGIMHASSGQEALGVGVGMVPSGVSSAGQAHGNNPHAMPPGAPSAQVPLSGRSQDDATVGYFFQRQAGEQLNGYSNKHRWPTGDSIDAAVRSVDEMNHDFQALALESRGMGELLPAKKFWEHEDPAKDGQKGMFLADEWRENTWGASHHSMSQPIMVQRRPGQGFHGNHDVASVLSPRSESGGLGVSMVEYVLSSSPADKLDPRFRKGVFSVRDCELDGPEKGEQKCKASPFEEEKKRDLISADTDNVSKLNGRGLPNGIESDCKDFNRTPGSRQASPTEITERIGPNSISAEVLGQHQNPMSNKPLSDEFPSTESQNLDGMEQVGLHSLQFDYPGNQIQMDSAGAGVGLFDYNTQQQMFQRQNALTVQQLTAAQQQQQQFTLAAAQQPHLAGMFSTGLAPAAFVPNPYIISAGHPGADPYTTLAGPAVVSPQYYGIPWGVYPAGLFQQQAAAAAQAANSNNQQAATQASQGQQQVMRATSNQRPLTPNQAQQGQQPESLAAANQAQIFGQGLATSMPGYQLLTPTAYYDQTGALVVGPGARAGLAAQVRLVASAPVLLSPAAAQAATATGANSLTGATNGMFRQMGPQQQQQQQQQQHQQQQQQPNANLHSNSFYGNSTMSNNSQSSSLFSPGPGQPGSTSLGFGSSNSLGAAIGSAFGGFGSSVGNSAGSSGSRRDSLSASCDLYKRSSSSLAAIGQPYYNSLGFSSSPSPISMPLPSQTSGHSLTPPPSLSSHGSSSSLHLGGLTNGSGRYFSAAPGAEAKYRSAANTSSFFSSNSQLFPPSRLRYNRADIMPSGRSRLLEDFRNNRFPNLQLRDLMGHIVEFSQDQHGSRFIQQKLERASPAERQLVFSEILQAAYQLMTDVFGNYVIQKFFEFGSMDQKLALATRIRGHVLPLALQMYGCRVIQKALESISTDQQSEMVRELDGHVLKCVKDQNGNHVVQKCIECVTPQSLHFIIEAFKGQVYVLSTHPYGCRVIQRILEHCTPEQTLPILEELHQSTEQLVQDQYGNYVIQHVLEHGRSDDKSKIVCEVRGQVLVLSQHKFASNVVEKCVTHSSRTERAFLIDEICCQNDGPHSALYTMMKDQYANYVVQKMIDMAEPAQRKIIMHKIRPHITTLRKYTYGKHILAKLEKYYMKNSPDLGLLVGPSNGML.

5 disordered regions span residues 41–68 (VSSAGQAHGNNPHAMPPGAPSAQVPLSG), 265–296 (VSKLNGRGLPNGIESDCKDFNRTPGSRQASPT), 480–518 (QQAATQASQGQQQVMRATSNQRPLTPNQAQQGQQPESLA), 592–662 (LTGA…SLGF), and 730–759 (PISMPLPSQTSGHSLTPPPSLSSHGSSSSL). The segment covering 287–296 (TPGSRQASPT) has biased composition (polar residues). Residues 480 to 492 (QQAATQASQGQQQ) show a composition bias toward low complexity. Positions 493 to 518 (VMRATSNQRPLTPNQAQQGQQPESLA) are enriched in polar residues. Residues 606–622 (QQQQQQQQQQHQQQQQQ) show a composition bias toward low complexity. Over residues 623–633 (PNANLHSNSFY) the composition is skewed to polar residues. Residues 634 to 657 (GNSTMSNNSQSSSLFSPGPGQPGS) show a composition bias toward low complexity. The PUM-HD domain occupies 815–1155 (GRSRLLEDFR…HILAKLEKYY (341 aa)). Pumilio repeat units lie at residues 835 to 870 (DLMGHIVEFSQDQHGSRFIQQKLERASPAERQLVFS), 871 to 906 (EILQAAYQLMTDVFGNYVIQKFFEFGSMDQKLALAT), 907 to 942 (RIRGHVLPLALQMYGCRVIQKALESISTDQQSEMVR), 943 to 978 (ELDGHVLKCVKDQNGNHVVQKCIECVTPQSLHFIIE), 979 to 1014 (AFKGQVYVLSTHPYGCRVIQRILEHCTPEQTLPILE), 1015 to 1050 (ELHQSTEQLVQDQYGNYVIQHVLEHGRSDDKSKIVC), 1051 to 1086 (EVRGQVLVLSQHKFASNVVEKCVTHSSRTERAFLID), 1087 to 1129 (EICC…IIMH), and 1130 to 1167 (KIRPHITTLRKYTYGKHILAKLEKYYMKNSPDLGLLVG). The interval 850–854 (SRFIQ) is adenine-nucleotide binding in RNA target. The interval 886–890 (NYVIQ) is uracil-nucleotide binding in RNA target. The adenine-nucleotide binding in RNA target stretch occupies residues 922-926 (CRVIQ). The non-specific-nucleotide binding in RNA target stretch occupies residues 958–962 (NHVVQ). Residues 994-998 (CRVIQ) are adenine-nucleotide binding in RNA target. Positions 1030–1034 (NYVIQ) are uracil-nucleotide binding in RNA target. The tract at residues 1066–1070 (SNVVE) is guanine-nucleotide binding in RNA target. The tract at residues 1109–1113 (NYVVQ) is uracil-nucleotide binding in RNA target.

As to quaternary structure, component of a complex with papd4, sympk, tacc3, parn, dazl and cpeb1. Phosphorylated.

The protein localises to the cytoplasm. The protein resides in the P-body. It localises to the cytoplasmic granule. Its function is as follows. Sequence-specific RNA-binding protein that acts as a post-transcriptional repressor by binding the 3'-UTR of mRNA targets. Binds to an RNA consensus sequence, the Pumilio Response Element (PRE), 5'-UGUANAUA-3', that is related to the Nanos Response Element (NRE). Mediates post-transcriptional repression of transcripts via different mechanisms: acts via direct recruitment of deadenylase complexes leading to translational inhibition and mRNA degradation. Also mediates deadenylation-independent repression by promoting accessibility of miRNAs. The chain is Pumilio homolog 2 (pum2) from Xenopus laevis (African clawed frog).